A 396-amino-acid chain; its full sequence is MKIKTGARILALSALTTMMFSASALAKIEEGKLVIWINGDKGYNGLAEVGKKFEKDTGIKVTVEHPDKLEEKFPQVAATGDGPDIIFWAHDRFGGYAQSGLLAEITPDKAFQDKLYPFTWDAVRYNGKLIAYPIAVEALSLIYNKDLLPNPPKTWEEIPALDKELKAKGKSALMFNLQEPYFTWPLIAADGGYAFKYENGKYDIKDVGVDNAGAKAGLTFLVDLIKNKHMNADTDYSIAEAAFNKGETAMTINGPWAWSNIDTSKVNYGVTVLPTFKGQPSKPFVGVLSAGINAASPNKELAKEFLENYLLTDEGLEAVNKDKPLGAVALKSYEEELAKDPRIAATMENAQKGEIMPNIPQMSAFWYAVRTAVINAASGRQTVDEALKDAQTRITK.

An N-terminal signal peptide occupies residues 1–26 (MKIKTGARILALSALTTMMFSASALA).

The protein belongs to the bacterial solute-binding protein 1 family. As to quaternary structure, the complex is composed of two ATP-binding proteins (MalK), two transmembrane proteins (MalG and MalF) and a solute-binding protein (MalE).

The protein resides in the periplasm. Part of the ABC transporter complex MalEFGK involved in maltose/maltodextrin import. Binds maltose and higher maltodextrins. The chain is Maltose/maltodextrin-binding periplasmic protein (malE) from Escherichia coli O157:H7.